The primary structure comprises 87 residues: DNA-directed RNA polymerase subunit omega (87 aa).

The protein belongs to the RNA polymerase subunit omega family. In terms of assembly, the RNAP catalytic core consists of 2 alpha, 1 beta, 1 beta' and 1 omega subunit. When a sigma factor is associated with the core the holoenzyme is formed, which can initiate transcription.

It catalyses the reaction RNA(n) + a ribonucleoside 5'-triphosphate = RNA(n+1) + diphosphate. Promotes RNA polymerase assembly. Latches the N- and C-terminal regions of the beta' subunit thereby facilitating its interaction with the beta and alpha subunits. This Pseudomonas savastanoi pv. phaseolicola (strain 1448A / Race 6) (Pseudomonas syringae pv. phaseolicola (strain 1448A / Race 6)) protein is DNA-directed RNA polymerase subunit omega.